The following is a 501-amino-acid chain: L-arabinose isomerase (501 aa).

Residues Glu306, Glu333, His350, and His450 each coordinate Mn(2+).

The protein belongs to the arabinose isomerase family. In terms of assembly, homohexamer. Requires Mn(2+) as cofactor.

It catalyses the reaction beta-L-arabinopyranose = L-ribulose. The protein operates within carbohydrate degradation; L-arabinose degradation via L-ribulose; D-xylulose 5-phosphate from L-arabinose (bacterial route): step 1/3. In terms of biological role, catalyzes the conversion of L-arabinose to L-ribulose. This chain is L-arabinose isomerase, found in Pectobacterium atrosepticum (strain SCRI 1043 / ATCC BAA-672) (Erwinia carotovora subsp. atroseptica).